Reading from the N-terminus, the 114-residue chain is Hemerythrin subunit 1 (114 aa).

Fe cation contacts are provided by His26, His55, Glu59, His74, His78, His102, and Asp107.

Belongs to the hemerythrin family.

Functionally, hemerythrin is a respiratory protein in blood cells of certain marine worms. The oxygen-binding site in each chain contains two iron atoms. This chain is Hemerythrin subunit 1, found in Golfingia vulgaris (Marine worm).